We begin with the raw amino-acid sequence, 439 residues long: Fibroleukin (439 aa).

Positions 1 to 23 (MKLANWYWLSSAVLATYGFLVVA) are cleaved as a signal peptide. Residue N25 is glycosylated (N-linked (GlcNAc...) asparagine). The stretch at 73–165 (SRIEEVFKEV…GRLEKLNLVN (93 aa)) forms a coiled coil. Residues 103–126 (ADDNGDPGRNGLLLPSTGAPGEVG) form a disordered region. N-linked (GlcNAc...) asparagine glycosylation is found at N179, N235, N263, and N336. Residues 204–436 (PVQHLIYKDC…EAKMMIRPKH (233 aa)) form the Fibrinogen C-terminal domain. A disulfide bond links C213 and C242. C371 and C384 are disulfide-bonded.

Homotetramer; disulfide-linked. In terms of tissue distribution, constitutively expressed in cytotoxic T-cells.

Its subcellular location is the secreted. Functionally, may play a role in physiologic lymphocyte functions at mucosal sites. The polypeptide is Fibroleukin (FGL2) (Homo sapiens (Human)).